The primary structure comprises 2475 residues: MGSLGDLPLNRISVLFGSKYSEIDRSALHIRRYLSTHRAATWLEDAVEDLPSVWQDVTKVWPAGEGIHGEAGLQQLSAFLRGEELPLNMEDPMNYLLMPITVLRHLVDFHEFKEAGSDCDIKSMQGFCAGYLAAVAGCWEKDQSEFSKVVATMVRTAIFIGAAVDLDELATQRATSIAVRWKTAEAYKPFAATLGRYPGAYIACITDESSVTVTVWEDQAAALVQELEGNGLLVKDTRLRGRFHHADHLSAAQDILKLCQQDTRFQLPNTCPARELPRSNADGDLPTLKSVLSVVIQSILISQADWNLTVSNTLNSLDSSDAKCILSIGAGQFLPRQARSQILNAIDSSRGDNLVNGDHDNIAITNGTSFAASSVNGTAPVPTSIPIAVTGLACRYPQADCVEELWKILEQGLCTVSRMPESRLKPDRLQRKPDGPFWGNFISRPDAFDHRFFKISAREAESMDPQQRLLLQVAYEAMESAGYCGLRATNLPEDVGCYVGVGTEDYSENVGSRNATAFSATGTLQAFNSGRVSHHFGWTGPSVTVDTACSSAAVAIHLACQALQTSDCSVAVAGGVNVMTDPRWSQNLAAASFLSPTGASKAFDTNANGYCRGEGAGLVVLRPLEAALRDGDPIHAVITGTSVNQGANCSPITVPDSNSQRSLYMKALSLSGLKPEVVSYVEAHGTGTQVGDPIEFESIRKTFAVPSRTERLYVGSIKDNIGHTETSSGVAGLLKTILMLQKGKIPKQANFTQLNPKIIVNQEDQMSIPTSLIRWETQKRVAMVTNYGAAGSNAAIVLKEPIPTPTALCSDEKERLLSAVPFFVAAQTEESLREYCQALKARLLNGAHLESIAVQDLAFNLARKQNRSMEFSVSFTNSSSVTELRERLDDVISGRMNIVKKTHTSNPVVLCFGGQTGNKASISESLVASSALIRLHLDECESACKALGLPSLFPAIFDSSPNKDIVNLHCVLFSIQYATAKAWIDSGLEVDRMIGHSFGQLTAVCVAGGLSLIDTMRLISTRAHLIRSEWTSEIGVMLSLKGEKNAVRDLLDSVPDSADLACVNGADSFVAAGSEVAIHEIEKNAAERGIKSQRLDNTHAFHSRLVDPILPGLAKVASSLNYKPLRIPVEACSESKEDWMLPTWEKIVQHSRKPVYFHQAVHRTISRIQGPAIWLEAGTMSPIIGMVRRAVDTPSSARGHVFCPMDLSGPQAESNLAKVTSSLWSNGVPVQFWPFHGSQRGYQWINLPPYQFAKTSHWIEYDPTAFSYQMSKQEKPPIEDLKLVQLLKNEGKVSLFRINDNDPMFRMCTAGHAVVEQNLCPASLYFELVVRAAITTLPKGTDPTMYHLADLNISAPLVLDMPGSVLLELTQRDSTPGQWTFVLFTREDTLQSVTHATGTISLSPGADNTGISSRFSSLKRLLNPAHWDSIATSPSSSGLKRSTVYQAFRRAVTYAEYYRGVESVYALGHEATGRVHLPSSPTKNSPCDPILIDNFLQVAGIHVNCLSETHDDEVFVCSSVGDVIIGESFVKRDPSVAAPWVVYSNYEQESKKKALCDVFVVDEATGSLALCVLAATFTSVSIQSLRRTLTRLTNKGVSPVPVDIAVAAEVTPAVPAASSITATRASSNGDDLRTVQAMLSELLGIPTSEIPASASLADVGVDSLMNTEVLSEIKNRFQVVITKSELTAIEDVGALVQRIFPGRSTVHIENHDQPAVGITAINGGSKPSSGGPVPASKVGDDLSGFADKAGELFTASRKSNEHSEATKFLGFCDTVFPQQMELVTAYVVEAFKVLGVDLQSLKAGQPIPSVDILPQHGQVMNQLYAVLEYSGLVDRSGTSICRGHCEVNQDATAVLHQKILNDHPQHTSEHKLLHTTGPRLADCLTGAADPLSLLFQDAQARALMQDVYSNAPMFKSATMHLAQYLKNLLRQVNSPRPIKILEIGAGTGGTTDYLLKQLSSVAGLRFEYTFTDISPSLVTLARKRFKTFNFIHYQTLDIEKGPASEMLGQYDIIVSSNCIHATRSLSTSCSNIQKLLRPHGILCLIELTRNLFWFDLVFGLLEGWWLFNDGRSHALAHESFWDQTLRSSGFNWVDWTDNQSEESNILRLIVASPTRPALSLEATTESSAIHEETVVYGRKDGLDLLADIHYPQILDSEGKNRPVALLIHGGGHIMLSRKDVRPPQVKLLIDMGFLPVSIDYRLCPEVSLLEGPMADACEALAWAQNTLPQLNLQRPDIRPDGNNVVAVGWSSGGHLAMTLAWTAPARGLRAPEAVLSFYCATDYTDPFWTKPNFPYQGDVSIEDVPTQSPFLGINDRAITSYNPAPRKRALGGWMSPTDPRSRIALHMNWTGQTLTVLFNGHKYKSLVAIAGGDDNVILPKPTLSEIQKACPLSHVYAGQYKTPTFIIHGTLDDLIPVEQSQRTHDQMLANGVESELRVVADAPHLFDMSPNLKNNKDACRAVADGYEFLRSHVGL.

The segment at 14–253 is N-terminal acylcarrier protein transacylase domain (SAT); it reads VLFGSKYSEI…HHADHLSAAQ (240 aa). Positions 384–800 constitute a Ketosynthase family 3 (KS3) domain; that stretch reads SIPIAVTGLA…GSNAAIVLKE (417 aa). Active-site for beta-ketoacyl synthase activity residues include Cys549, His684, and His723. The tract at residues 910–1212 is malonyl-CoA:ACP transacylase (MAT) domain; sequence LCFGGQTGNK…CPMDLSGPQA (303 aa). Ser997 functions as the For acyl/malonyl transferase activity in the catalytic mechanism. Residues 1279-1407 are N-terminal hotdog fold; sequence EDLKLVQLLK…GTISLSPGAD (129 aa). In terms of domain architecture, PKS/mFAS DH spans 1279–1586; it reads EDLKLVQLLK…FTSVSIQSLR (308 aa). A product template (PT) domain region spans residues 1282 to 1585; it reads KLVQLLKNEG…TFTSVSIQSL (304 aa). His1312 functions as the Proton acceptor; for dehydratase activity in the catalytic mechanism. Residues 1435–1586 are C-terminal hotdog fold; it reads SSSGLKRSTV…FTSVSIQSLR (152 aa). The Proton donor; for dehydratase activity role is filled by Asp1493. The Carrier domain maps to 1626–1703; it reads SSNGDDLRTV…ALVQRIFPGR (78 aa). Residue Ser1663 is modified to O-(pantetheine 4'-phosphoryl)serine. The interval 1865-2098 is methyltransferase (CMeT) domain; it reads QHTSEHKLLH…GFNWVDWTDN (234 aa). The tract at residues 2127 to 2475 is thioesterase (TE) domain; that stretch reads SAIHEETVVY…YEFLRSHVGL (349 aa). Catalysis depends on for thioesterase activity residues Ser2250, Asp2412, and His2444.

The enzyme catalyses 3 malonyl-CoA + acetyl-CoA + 2 S-adenosyl-L-methionine = 3,5-dimethylorsellinate + 2 S-adenosyl-L-homocysteine + 3 CO2 + 4 CoA. Its pathway is secondary metabolite biosynthesis; terpenoid biosynthesis. Its function is as follows. Non-reducing polyketide synthase; part of the gene cluster A that mediates the biosynthesis of the fungal meroterpenoid acetoxydehydroaustin. The first step of the pathway is the synthesis of 3,5-dimethylorsellinic acid by the polyketide synthase ausA. 3,5-dimethylorsellinic acid is then prenylated by the polyprenyl transferase ausN. Further epoxidation by the FAD-dependent monooxygenase ausM and cyclization by the probable terpene cyclase ausL lead to the formation of protoaustinoid A. Protoaustinoid A is then oxidized to spiro-lactone preaustinoid A3 by the combined action of the FAD-binding monooxygenases ausB and ausC, and the dioxygenase ausE. Acid-catalyzed keto-rearrangement and ring contraction of the tetraketide portion of preaustinoid A3 by ausJ lead to the formation of preaustinoid A4. The aldo-keto reductase ausK, with the help of ausH, is involved in the next step by transforming preaustinoid A4 into isoaustinone which is in turn hydroxylated by the P450 monooxygenase ausI to form austinolide. The cytochrome P450 monooxygenase ausG then modifies austinolide to austinol. Austinol is further acetylated to austin by the O-acetyltransferase ausP, which spontaneously changes to dehydroaustin. The cytochrome P450 monooxygenase then converts dehydroaustin is into 7-dehydrodehydroaustin. The hydroxylation catalyzed by ausR permits the second O-acetyltransferase ausQ to add an additional acetyl group to the molecule, leading to the formation of acetoxydehydroaustin. Due to genetic rearrangements of the clusters and the subsequent loss of some enzymes, the end product of the Penicillium brasilianum austinoid biosynthesis clusters is acetoxydehydroaustin. This is Non-reducing polyketide synthase ausA from Penicillium brasilianum.